The chain runs to 132 residues: Small ribosomal subunit protein uS11 (132 aa).

Belongs to the universal ribosomal protein uS11 family. In terms of assembly, part of the 30S ribosomal subunit. Interacts with proteins S7 and S18. Binds to IF-3.

Its function is as follows. Located on the platform of the 30S subunit, it bridges several disparate RNA helices of the 16S rRNA. Forms part of the Shine-Dalgarno cleft in the 70S ribosome. The polypeptide is Small ribosomal subunit protein uS11 (Chlamydia trachomatis serovar A (strain ATCC VR-571B / DSM 19440 / HAR-13)).